The chain runs to 95 residues: Small ribosomal subunit protein uS19 (95 aa).

Residues 73–95 (EFSPTRTYRGHGADKNAKGSKKK) are disordered.

It belongs to the universal ribosomal protein uS19 family.

Protein S19 forms a complex with S13 that binds strongly to the 16S ribosomal RNA. This chain is Small ribosomal subunit protein uS19, found in Deinococcus radiodurans (strain ATCC 13939 / DSM 20539 / JCM 16871 / CCUG 27074 / LMG 4051 / NBRC 15346 / NCIMB 9279 / VKM B-1422 / R1).